Here is a 220-residue protein sequence, read N- to C-terminus: Cytidylate kinase (220 aa).

11–19 provides a ligand contact to ATP; it reads GPTASGKGT.

It belongs to the cytidylate kinase family. Type 1 subfamily.

It localises to the cytoplasm. It catalyses the reaction CMP + ATP = CDP + ADP. The enzyme catalyses dCMP + ATP = dCDP + ADP. This chain is Cytidylate kinase, found in Polynucleobacter asymbioticus (strain DSM 18221 / CIP 109841 / QLW-P1DMWA-1) (Polynucleobacter necessarius subsp. asymbioticus).